A 147-amino-acid polypeptide reads, in one-letter code: Allograft inflammatory factor 1 (147 aa).

N-acetylserine is present on Ser2. Position 11 is an N6-acetyllysine (Lys11). Ser39 is subject to Phosphoserine. The EF-hand 1 domain maps to 45–80; the sequence is SKLEAFKKKYMEFDLNEDGGIDIMSLKRMMEKLGVP. Ca(2+) contacts are provided by Asp58, Asn60, and Asp62. The EF-hand 2; degenerate domain occupies 81 to 115; that stretch reads KTHLELKKLIMEVSSGPGETFSYSDFLKMMLGKRS. The tract at residues 128–147 is disordered; the sequence is AREQEKPTGLPAKKAISELP.

Phosphorylated on serine residues.

The protein resides in the cytoplasm. The protein localises to the cytoskeleton. It is found in the cell projection. Its subcellular location is the ruffle membrane. It localises to the phagocytic cup. May play a role in macrophage activation and function. This chain is Allograft inflammatory factor 1 (AIF1), found in Bos taurus (Bovine).